A 33-amino-acid chain; its full sequence is SLFSLIKAGAKFLGKNLLKQGAQYAACKVSKEC.

Residues C27 and C33 are joined by a disulfide bond.

The protein belongs to the frog skin active peptide (FSAP) family. Brevinin subfamily. Expressed by the skin glands.

It is found in the secreted. Functionally, shows antibacterial activity against both Gram-negative and Gram-positive bacteria. The sequence is that of Rugosin-B from Glandirana rugosa (Japanese wrinkled frog).